A 799-amino-acid chain; its full sequence is Protein translocase subunit SecA (799 aa).

Residues glutamine 85, 103 to 107, and aspartate 504 each bind ATP; that span reads GEGKT.

It belongs to the SecA family. In terms of assembly, monomer and homodimer. Part of the essential Sec protein translocation apparatus which comprises SecA, SecYEG and auxiliary proteins SecDF. Other proteins may also be involved.

The protein localises to the cell membrane. It is found in the cytoplasm. It carries out the reaction ATP + H2O + cellular proteinSide 1 = ADP + phosphate + cellular proteinSide 2.. In terms of biological role, part of the Sec protein translocase complex. Interacts with the SecYEG preprotein conducting channel. Has a central role in coupling the hydrolysis of ATP to the transfer of proteins into and across the cell membrane, serving as an ATP-driven molecular motor driving the stepwise translocation of polypeptide chains across the membrane. The polypeptide is Protein translocase subunit SecA (Lactobacillus gasseri (strain ATCC 33323 / DSM 20243 / BCRC 14619 / CIP 102991 / JCM 1131 / KCTC 3163 / NCIMB 11718 / NCTC 13722 / AM63)).